The chain runs to 156 residues: Small ribosomal subunit protein uS7 (156 aa).

The protein belongs to the universal ribosomal protein uS7 family. Part of the 30S ribosomal subunit. Contacts proteins S9 and S11.

One of the primary rRNA binding proteins, it binds directly to 16S rRNA where it nucleates assembly of the head domain of the 30S subunit. Is located at the subunit interface close to the decoding center, probably blocks exit of the E-site tRNA. In Mycobacterium sp. (strain JLS), this protein is Small ribosomal subunit protein uS7.